A 370-amino-acid polypeptide reads, in one-letter code: DNA replication and repair protein RecF (370 aa).

30–37 (GQNGMGKT) lines the ATP pocket.

This sequence belongs to the RecF family.

Its subcellular location is the cytoplasm. Functionally, the RecF protein is involved in DNA metabolism; it is required for DNA replication and normal SOS inducibility. RecF binds preferentially to single-stranded, linear DNA. It also seems to bind ATP. This chain is DNA replication and repair protein RecF, found in Bacteroides fragilis (strain YCH46).